Reading from the N-terminus, the 948-residue chain is Isoleucine--tRNA ligase (948 aa).

The 'HIGH' region signature appears at 58–68; that stretch reads PYANGSIHIGH. Glutamate 572 contributes to the L-isoleucyl-5'-AMP binding site. The short motif at 613 to 617 is the 'KMSKS' region element; it reads KMSKS. Lysine 616 contributes to the ATP binding site. Residues cysteine 911, cysteine 914, cysteine 931, and cysteine 934 each coordinate Zn(2+).

Belongs to the class-I aminoacyl-tRNA synthetase family. IleS type 1 subfamily. In terms of assembly, monomer. Zn(2+) serves as cofactor.

It localises to the cytoplasm. It carries out the reaction tRNA(Ile) + L-isoleucine + ATP = L-isoleucyl-tRNA(Ile) + AMP + diphosphate. Its function is as follows. Catalyzes the attachment of isoleucine to tRNA(Ile). As IleRS can inadvertently accommodate and process structurally similar amino acids such as valine, to avoid such errors it has two additional distinct tRNA(Ile)-dependent editing activities. One activity is designated as 'pretransfer' editing and involves the hydrolysis of activated Val-AMP. The other activity is designated 'posttransfer' editing and involves deacylation of mischarged Val-tRNA(Ile). In Edwardsiella ictaluri (strain 93-146), this protein is Isoleucine--tRNA ligase.